We begin with the raw amino-acid sequence, 239 residues long: MMDLFETNAYFFNDLRYLEGDHGTLDMPGVSPLYEGNDSPLSPGQDPVPSETGCESSGEEHVLAPPGLQAHCEGQCLMWACKICKRKSAPTDRRKAATLRERRRLKKINEAFDALKKKTVPNPNQRLPKVEILRSAINYIEKLQDLLHSLDEQEQSNDTDPYTYNLKENHVTPSEYHWKKTCQSWQENPDHSSSQMAGHREGAVLESSESSSLRRLSSIVDSISTEEPKARCPSQISEK.

The disordered stretch occupies residues 28–59 (PGVSPLYEGNDSPLSPGQDPVPSETGCESSGE). Positions 92–143 (DRRKAATLRERRRLKKINEAFDALKKKTVPNPNQRLPKVEILRSAINYIEKL) constitute a bHLH domain. Over residues 182-196 (CQSWQENPDHSSSQM) the composition is skewed to polar residues. The disordered stretch occupies residues 182–239 (CQSWQENPDHSSSQMAGHREGAVLESSESSSLRRLSSIVDSISTEEPKARCPSQISEK). Over residues 204 to 223 (VLESSESSSLRRLSSIVDSI) the composition is skewed to low complexity.

In terms of assembly, efficient DNA binding requires dimerization with another bHLH protein.

It is found in the nucleus. Functionally, involved in muscle differentiation (myogenic factor). Induces fibroblasts to differentiate into myoblasts. Probable sequence specific DNA-binding protein. The chain is Myogenic factor 6 (myf6) from Danio rerio (Zebrafish).